Here is a 417-residue protein sequence, read N- to C-terminus: NADH-quinone oxidoreductase subunit D (417 aa).

Belongs to the complex I 49 kDa subunit family. NDH-1 is composed of 14 different subunits. Subunits NuoB, C, D, E, F, and G constitute the peripheral sector of the complex.

It is found in the cell inner membrane. It carries out the reaction a quinone + NADH + 5 H(+)(in) = a quinol + NAD(+) + 4 H(+)(out). NDH-1 shuttles electrons from NADH, via FMN and iron-sulfur (Fe-S) centers, to quinones in the respiratory chain. The immediate electron acceptor for the enzyme in this species is believed to be ubiquinone. Couples the redox reaction to proton translocation (for every two electrons transferred, four hydrogen ions are translocated across the cytoplasmic membrane), and thus conserves the redox energy in a proton gradient. The protein is NADH-quinone oxidoreductase subunit D of Cupriavidus necator (strain ATCC 17699 / DSM 428 / KCTC 22496 / NCIMB 10442 / H16 / Stanier 337) (Ralstonia eutropha).